We begin with the raw amino-acid sequence, 133 residues long: Ribosomal silencing factor RsfS (133 aa).

Belongs to the Iojap/RsfS family. Interacts with ribosomal protein uL14 (rplN).

It is found in the cytoplasm. Functionally, functions as a ribosomal silencing factor. Interacts with ribosomal protein uL14 (rplN), blocking formation of intersubunit bridge B8. Prevents association of the 30S and 50S ribosomal subunits and the formation of functional ribosomes, thus repressing translation. In Zymomonas mobilis subsp. mobilis (strain ATCC 31821 / ZM4 / CP4), this protein is Ribosomal silencing factor RsfS.